A 336-amino-acid chain; its full sequence is Terephthalate 1,2-dioxygenase, reductase component 2 (336 aa).

The 89-residue stretch at 3-91 (HQIHIHDSDI…DIRIHPSSFR (89 aa)) folds into the 2Fe-2S ferredoxin-type domain. [2Fe-2S] cluster is bound by residues Cys37, Cys42, Cys45, and Cys75. Residues 98–197 (RKRFTAKVYS…ELPFGSIALK (100 aa)) form the FAD-binding FR-type domain.

As to quaternary structure, monomer. Part of a multicomponent enzyme system composed of a reductase (TphA1I or TphA1II) and a two-subunit oxygenase component (TphA2I or TphA2II and TphA3I or TphA3II). FAD is required as a cofactor. Requires [2Fe-2S] cluster as cofactor.

The enzyme catalyses terephthalate + NADH + O2 + H(+) = (3S,4R)-3,4-dihydroxycyclohexa-1,5-diene-1,4-dicarboxylate + NAD(+). Functionally, component of the terephthalate 1,2-dioxygenase multicomponent enzyme system which catalyzes the dioxygenation of terephthalate (TER/TPA) to 1,2-dihydroxy-3,5-cyclohexadiene-1,4-dicarboxylic acid (DCD). TphA1 probably reduces TphA2A3. It can also use 2,5-dicarboxypyridine (PDC) and 1,4-napthalenedicarboxylic acid (NDC) as substrates, and preferentially uses NADPH which is the physiological electron donor. In Comamonas sp, this protein is Terephthalate 1,2-dioxygenase, reductase component 2 (tphA1II).